The sequence spans 305 residues: tRNA pseudouridine synthase B (305 aa).

Asp-39 (nucleophile) is an active-site residue.

Belongs to the pseudouridine synthase TruB family. Type 1 subfamily.

It catalyses the reaction uridine(55) in tRNA = pseudouridine(55) in tRNA. Its function is as follows. Responsible for synthesis of pseudouridine from uracil-55 in the psi GC loop of transfer RNAs. This chain is tRNA pseudouridine synthase B, found in Staphylococcus aureus (strain bovine RF122 / ET3-1).